The following is a 223-amino-acid chain: MPITDWPADERPREKLLSRGAAALSDAELLAIFLRTGVAGKTAVDLARELLSRFGGLRPLLQADLVSFSSARGLGSAKYAQLQAVLEMGRRHLSESLARGDALTSPDDTRRFLAARLRDYPFEVFACLFLDNRHRVIAFEELFRGTIDGASVHPREVVRRALAHNAAALILAHNHPSGVAEPSRSDEAITRRLRDALALVDIRVLDHVVVGDSLVSFAERGLL.

Residues 102–223 form the MPN domain; it reads ALTSPDDTRR…LVSFAERGLL (122 aa). His-173, His-175, and Asp-186 together coordinate Zn(2+). The short motif at 173–186 is the JAMM motif element; it reads HNHPSGVAEPSRSD.

The protein belongs to the UPF0758 family.

The protein is UPF0758 protein Tgr7_0100 of Thioalkalivibrio sulfidiphilus (strain HL-EbGR7).